A 276-amino-acid polypeptide reads, in one-letter code: Pantothenate synthetase (276 aa).

An ATP-binding site is contributed by 25-32 (MGYLHRGH). His-32 functions as the Proton donor in the catalytic mechanism. Gln-56 serves as a coordination point for (R)-pantoate. Gln-56 contacts beta-alanine. 143-146 (GEKD) provides a ligand contact to ATP. Gln-149 serves as a coordination point for (R)-pantoate. ATP-binding positions include Val-172 and 180–183 (LSSR).

The protein belongs to the pantothenate synthetase family. In terms of assembly, homodimer.

The protein resides in the cytoplasm. It carries out the reaction (R)-pantoate + beta-alanine + ATP = (R)-pantothenate + AMP + diphosphate + H(+). It participates in cofactor biosynthesis; (R)-pantothenate biosynthesis; (R)-pantothenate from (R)-pantoate and beta-alanine: step 1/1. Its function is as follows. Catalyzes the condensation of pantoate with beta-alanine in an ATP-dependent reaction via a pantoyl-adenylate intermediate. The polypeptide is Pantothenate synthetase (Thermus thermophilus (strain ATCC BAA-163 / DSM 7039 / HB27)).